Here is a 148-residue protein sequence, read N- to C-terminus: 3-dehydroquinate dehydratase (148 aa).

Tyrosine 23 acts as the Proton acceptor in catalysis. 3 residues coordinate substrate: asparagine 75, histidine 81, and aspartate 88. Histidine 101 serves as the catalytic Proton donor. Residues 102 to 103 (MS) and arginine 112 contribute to the substrate site.

It belongs to the type-II 3-dehydroquinase family. Homododecamer.

It catalyses the reaction 3-dehydroquinate = 3-dehydroshikimate + H2O. Its pathway is metabolic intermediate biosynthesis; chorismate biosynthesis; chorismate from D-erythrose 4-phosphate and phosphoenolpyruvate: step 3/7. In terms of biological role, catalyzes a trans-dehydration via an enolate intermediate. This is 3-dehydroquinate dehydratase from Syntrophotalea carbinolica (strain DSM 2380 / NBRC 103641 / GraBd1) (Pelobacter carbinolicus).